The following is a 382-amino-acid chain: Proton extrusion protein PxcA (382 aa).

4 helical membrane-spanning segments follow: residues V162–I182, A257–M277, I305–L325, and F340–I360.

This sequence belongs to the CemA family.

Its subcellular location is the cell inner membrane. Functionally, required for H(+) efflux immediately after light irradiation to form a rapid H(+) concentration gradient across the thylakoid membranes. Together with PxcL, contributes to transient H(+) uptake following dark to light transition. The sequence is that of Proton extrusion protein PxcA from Synechococcus sp. (strain CC9605).